A 283-amino-acid chain; its full sequence is Elongation factor Ts (283 aa).

The segment at 80–83 (TDFV) is involved in Mg(2+) ion dislocation from EF-Tu.

It belongs to the EF-Ts family.

It is found in the cytoplasm. Its function is as follows. Associates with the EF-Tu.GDP complex and induces the exchange of GDP to GTP. It remains bound to the aminoacyl-tRNA.EF-Tu.GTP complex up to the GTP hydrolysis stage on the ribosome. This is Elongation factor Ts from Histophilus somni (strain 129Pt) (Haemophilus somnus).